The sequence spans 584 residues: METPREPAGFSKEGLKQLAGKTLGHVYRVIEKRQKPGENIELTEDGRPAQINERKAPLCDCTCFGLPRRYIIAIMSGLGFCISFGIRCNLGVAIVSMVNNSTIHLNGKIIIKEKAKFNWDPETVGLIHGSFFWGYIVTQIPGGYISSRLAANRVFGAAILLTSTLNMFIPSAARGHYGCVIFVRILQGLVEGVTYPACHGIWSKWAPPLERSRLATTSFCGSYAGAVIAMPLAGILVQYTGWSSVFYVYGCFGIFWYMFWILVSYESPAEHPTITAEERCYIEESIGESAKLLGPADKFKTPWRKFFTSMPVYAIIVANFCRSWTFYLLLISQPAYFEEVFGFEISKVGMLSALPHLVMTIIVPIGGQLADHLRSKNILSTTTVRKIMNCGGFGMEATLLLIVGYSHSKGVAISFLVLAVGFSGFAISGFNVNHLDIAPRYASILMGISNGVGTLSGMVCPLIVGAMTKHKTREEWQYVFLIASLVHYGGVIFYGIFASGEKQPWADPELTSDEKCGFIDEDELAEETGDITQSYGALGAPAKSYGATTQLNGGWAEGWDKREEYVQDGVEEGGYGYRQGGNYS.

At 1-70 (METPREPAGF…CTCFGLPRRY (70 aa)) the chain is on the cytoplasmic side. The chain crosses the membrane as a helical span at residues 71–91 (IIAIMSGLGFCISFGIRCNLG). Over 92–124 (VAIVSMVNNSTIHLNGKIIIKEKAKFNWDPETV) the chain is Vesicular. 2 N-linked (GlcNAc...) asparagine glycosylation sites follow: Asn99 and Asn100. The chain crosses the membrane as a helical span at residues 125-145 (GLIHGSFFWGYIVTQIPGGYI). Topologically, residues 146–148 (SSR) are cytoplasmic. Residues 149 to 169 (LAANRVFGAAILLTSTLNMFI) form a helical membrane-spanning segment. Over 170–177 (PSAARGHY) the chain is Vesicular. Residues 178–198 (GCVIFVRILQGLVEGVTYPAC) form a helical membrane-spanning segment. The Cytoplasmic portion of the chain corresponds to 199-216 (HGIWSKWAPPLERSRLAT). Residues 217–237 (TSFCGSYAGAVIAMPLAGILV) form a helical membrane-spanning segment. Residues 238–244 (QYTGWSS) are Vesicular-facing. Residues 245-265 (VFYVYGCFGIFWYMFWILVSY) traverse the membrane as a helical segment. Residues 266–310 (ESPAEHPTITAEERCYIEESIGESAKLLGPADKFKTPWRKFFTSM) lie on the Cytoplasmic side of the membrane. The helical transmembrane segment at 311-331 (PVYAIIVANFCRSWTFYLLLI) threads the bilayer. The Vesicular portion of the chain corresponds to 332–349 (SQPAYFEEVFGFEISKVG). The chain crosses the membrane as a helical span at residues 350 to 370 (MLSALPHLVMTIIVPIGGQLA). At 371 to 386 (DHLRSKNILSTTTVRK) the chain is on the cytoplasmic side. The chain crosses the membrane as a helical span at residues 387-407 (IMNCGGFGMEATLLLIVGYSH). Over 408–409 (SK) the chain is Vesicular. The helical transmembrane segment at 410-430 (GVAISFLVLAVGFSGFAISGF) threads the bilayer. Residues 431 to 445 (NVNHLDIAPRYASIL) are Cytoplasmic-facing. The helical transmembrane segment at 446 to 466 (MGISNGVGTLSGMVCPLIVGA) threads the bilayer. The Vesicular segment spans residues 467–477 (MTKHKTREEWQ). A helical transmembrane segment spans residues 478 to 498 (YVFLIASLVHYGGVIFYGIFA). The Cytoplasmic portion of the chain corresponds to 499 to 584 (SGEKQPWADP…YGYRQGGNYS (86 aa)).

Belongs to the major facilitator superfamily. Sodium/anion cotransporter family. VGLUT subfamily. In terms of tissue distribution, expressed in spinal cord and retinal ganglion cells.

It is found in the cytoplasmic vesicle. The protein resides in the secretory vesicle. Its subcellular location is the synaptic vesicle membrane. It localises to the membrane. The protein localises to the synapse. It is found in the synaptosome. The protein resides in the cell membrane. The enzyme catalyses L-glutamate(out) = L-glutamate(in). It carries out the reaction 3 Na(+)(out) + phosphate(out) = 3 Na(+)(in) + phosphate(in). It catalyses the reaction phosphate(in) = phosphate(out). The catalysed reaction is K(+)(in) + H(+)(out) = K(+)(out) + H(+)(in). The enzyme catalyses chloride(in) = chloride(out). With respect to regulation, chloride channel activity is allosterically activated by lumenal H(+) and Cl(-) leading to synaptic vesicles acidification. The L-glutamate transport activity is allosterically activated by lumenal H(+) and Cl(-). The allosteric requirement for H(+) efficiently prevents non-vesicular efflux across the plasma membrane. The L-glutamate uniporter activity exhibits a biphasic dependence on chloride concentration. In terms of biological role, multifunctional transporter that transports L-glutamate as well as multiple ions such as chloride, proton, potassium, sodium and phosphate. At the synaptic vesicle membrane, mainly functions as a uniporter which transports preferentially L-glutamate but also, phosphate from the cytoplasm into synaptic vesicles at presynaptic nerve terminals of excitatory neural cells. The L-glutamate or phosphate uniporter activity is electrogenic and is driven by the proton electrochemical gradient, mainly by the electrical gradient established by the vacuolar H(+)-ATPase across the synaptic vesicle membrane. In addition, functions as a chloride channel that allows a chloride permeation through the synaptic vesicle membrane therefore affects the proton electrochemical gradient and promotes synaptic vesicles acidification. Moreover, functions as a vesicular K(+)/H(+) antiport allowing to maintain the electrical gradient and to decrease chemical gradient and therefore sustain vesicular L-glutamate uptake. The vesicular H(+)/H(+) antiport activity is electroneutral. At the plasma membrane, following exocytosis, functions as a symporter of Na(+) and phosphate from the extracellular space to the cytoplasm allowing synaptic phosphate homeostasis regulation. The symporter activity is driven by an inside negative membrane potential and is electrogenic. Also involved in the regulation of retinal hyaloid vessel regression during postnatal development. May also play a role in the endocrine L-glutamatergic system of other tissues such as pineal gland and pancreas. Required for glutamate release by retinotectal synapses and visual acuity. The protein is Vesicular glutamate transporter 2.1 (slc17a6b) of Danio rerio (Zebrafish).